A 653-amino-acid polypeptide reads, in one-letter code: Probable sulfate transporter 3.4 (653 aa).

Residues 1 to 92 (MGHGTNRVED…QYDLKLLRSD (92 aa)) lie on the Cytoplasmic side of the membrane. Residues 93–113 (VISGLTIASLAIPQGISYAKL) traverse the membrane as a helical segment. Residues 114–115 (AN) are Extracellular-facing. The helical transmembrane segment at 116–136 (LPPIVGLYSSFVPPLIYAVLG) threads the bilayer. Residues 137-140 (SSRH) are Cytoplasmic-facing. The chain crosses the membrane as a helical span at residues 141-161 (LAVGPVSIASLVMGSMLSESV). The Extracellular segment spans residues 162 to 167 (SPTQDS). A helical membrane pass occupies residues 168 to 188 (ILYLKLAFTSTFFAGVFQASL). Topologically, residues 189–194 (GLLRLG) are cytoplasmic. The helical transmembrane segment at 195–215 (FMIDFLSKATLIGFTAGAAVI) threads the bilayer. Residues 216–247 (VSLQQLKGLLGIVHFTGKMQIVPVMSSVFNHR) lie on the Extracellular side of the membrane. Residues 248–268 (SEWSWETIVMGIGFLSILLTT) form a helical membrane-spanning segment. Residues 269 to 279 (RHISMRKPKLF) are Cytoplasmic-facing. A helical transmembrane segment spans residues 280–300 (WISAASPLASVIISTLLVYLI). Residues 301 to 331 (RSKTHAISFIGHLPKGLNPPSLNMLYFSGAH) are Extracellular-facing. The chain crosses the membrane as a helical span at residues 332 to 352 (LALAIKTGIITGILSLTEGIA). Residues 353–370 (VGRTFASLKNYQVNGNKE) lie on the Cytoplasmic side of the membrane. Residues 371–391 (MMAIGFMNMAGSCTSCYVTTG) traverse the membrane as a helical segment. At 392–407 (SFSRSAVNYNAGAKTA) the chain is on the extracellular side. Residues 408-428 (VSNIVMASAVLVTLLFLMPLF) form a helical membrane-spanning segment. Over 429–433 (YYTPN) the chain is Cytoplasmic. A helical transmembrane segment spans residues 434–454 (VILAAIILTAVIGLIDYQAAY). At 455–471 (KLWKVDKFDFFTCLCSF) the chain is on the extracellular side. A helical transmembrane segment spans residues 472 to 492 (FGVLFVSVPLGLAIAVAVSVI). The Cytoplasmic portion of the chain corresponds to 493-653 (KILLHVTRPN…SSTWKANGQP (161 aa)). The STAS domain occupies 520–643 (RYREASRIPG…LTVGEAVADL (124 aa)).

Belongs to the SLC26A/SulP transporter (TC 2.A.53) family.

It localises to the membrane. Functionally, h(+)/sulfate cotransporter that may play a role in the regulation of sulfate assimilation. This is Probable sulfate transporter 3.4 (SULTR3;4) from Arabidopsis thaliana (Mouse-ear cress).